The following is a 266-amino-acid chain: uncharacterized protein (266 aa).

Residues 12-28 (ILAAGLAIGCAGGYYAY) traverse the membrane as a helical segment. In terms of domain architecture, FAD-binding FR-type spans 40–140 (EIYAPFTVNK…RGPFKTTKLD (101 aa)).

It belongs to the flavoprotein pyridine nucleotide cytochrome reductase family. Requires FAD as cofactor.

Its subcellular location is the mitochondrion outer membrane. This is an uncharacterized protein from Schizosaccharomyces pombe (strain 972 / ATCC 24843) (Fission yeast).